The sequence spans 342 residues: Phosphate acyltransferase (342 aa).

Belongs to the PlsX family. Homodimer. Probably interacts with PlsY.

It localises to the cytoplasm. It carries out the reaction a fatty acyl-[ACP] + phosphate = an acyl phosphate + holo-[ACP]. It functions in the pathway lipid metabolism; phospholipid metabolism. In terms of biological role, catalyzes the reversible formation of acyl-phosphate (acyl-PO(4)) from acyl-[acyl-carrier-protein] (acyl-ACP). This enzyme utilizes acyl-ACP as fatty acyl donor, but not acyl-CoA. The chain is Phosphate acyltransferase from Legionella pneumophila (strain Paris).